Consider the following 226-residue polypeptide: Phosphoribosyl-dephospho-CoA transferase (226 aa).

Catalysis depends on residues aspartate 148 and aspartate 150.

It belongs to the MdcG family.

The catalysed reaction is apo-[malonate decarboxylase ACP] + 2'-(5''-triphospho-alpha-D-ribosyl)-3'-dephospho-CoA = holo-[malonate decarboxylase ACP] + diphosphate. Functionally, transfers 2'-(5-triphosphoribosyl)-3'-dephosphocoenzyme-A to the apo-[acyl-carrier-protein] of the malonate decarboxylase to yield holo-[acyl-carrier-protein]. This is Phosphoribosyl-dephospho-CoA transferase from Bradyrhizobium diazoefficiens (strain JCM 10833 / BCRC 13528 / IAM 13628 / NBRC 14792 / USDA 110).